A 107-amino-acid polypeptide reads, in one-letter code: Phosphoribosyl-ATP pyrophosphatase (107 aa).

The protein belongs to the PRA-PH family.

The protein resides in the cytoplasm. The catalysed reaction is 1-(5-phospho-beta-D-ribosyl)-ATP + H2O = 1-(5-phospho-beta-D-ribosyl)-5'-AMP + diphosphate + H(+). It functions in the pathway amino-acid biosynthesis; L-histidine biosynthesis; L-histidine from 5-phospho-alpha-D-ribose 1-diphosphate: step 2/9. The protein is Phosphoribosyl-ATP pyrophosphatase (hisE) of Clostridium tetani (strain Massachusetts / E88).